The primary structure comprises 331 residues: XylDLEGF operon transcriptional activator 3 (331 aa).

The 102-residue stretch at 214-315 folds into the HTH araC/xylS-type domain; the sequence is ERVVQFIEDN…GELPSDTLRR (102 aa). 2 DNA-binding regions (H-T-H motif) span residues 231–252 and 282–305; these read ERLAELALMSPRSLYTLFEKHA and VTEMALDYGFFHTGRFAENYRSTF.

It is found in the cytoplasm. Functionally, regulatory protein of the TOL plasmid xyl operons. XylS activates the xylXYZLTEGFJQKIH operon required for the degradation of toluene, m-xylene and p-xylene. The sequence is that of XylDLEGF operon transcriptional activator 3 (xylS3) from Pseudomonas putida (Arthrobacter siderocapsulatus).